The chain runs to 485 residues: Rhamnulokinase (485 aa).

10 to 14 (ASSGR) provides a ligand contact to ATP. Substrate is bound by residues Ala-78 and 233-235 (HDT). Catalysis depends on Asp-234, which acts as the Proton acceptor. Thr-256 lines the ATP pocket. Residue Asn-293 participates in substrate binding. Residue Gln-301 coordinates ATP. A disulfide bond links Cys-351 and Cys-368. ATP is bound at residue Gly-400.

This sequence belongs to the rhamnulokinase family. Mg(2+) serves as cofactor.

The catalysed reaction is L-rhamnulose + ATP = L-rhamnulose 1-phosphate + ADP + H(+). It functions in the pathway carbohydrate degradation; L-rhamnose degradation; glycerone phosphate from L-rhamnose: step 2/3. Functionally, involved in the catabolism of L-rhamnose (6-deoxy-L-mannose). Catalyzes the transfer of the gamma-phosphate group from ATP to the 1-hydroxyl group of L-rhamnulose to yield L-rhamnulose 1-phosphate. This chain is Rhamnulokinase, found in Bacillus subtilis (strain 168).